We begin with the raw amino-acid sequence, 256 residues long: Triosephosphate isomerase (256 aa).

9 to 11 (NWK) is a substrate binding site. Residue His97 is the Electrophile of the active site. Residue Glu169 is the Proton acceptor of the active site. Residues Gly175, Ser214, and 235-236 (GG) each bind substrate.

It belongs to the triosephosphate isomerase family. As to quaternary structure, homodimer.

It localises to the cytoplasm. The catalysed reaction is D-glyceraldehyde 3-phosphate = dihydroxyacetone phosphate. It participates in carbohydrate biosynthesis; gluconeogenesis. It functions in the pathway carbohydrate degradation; glycolysis; D-glyceraldehyde 3-phosphate from glycerone phosphate: step 1/1. Functionally, involved in the gluconeogenesis. Catalyzes stereospecifically the conversion of dihydroxyacetone phosphate (DHAP) to D-glyceraldehyde-3-phosphate (G3P). The sequence is that of Triosephosphate isomerase from Aliivibrio salmonicida (strain LFI1238) (Vibrio salmonicida (strain LFI1238)).